The following is a 118-amino-acid chain: Holo-[acyl-carrier-protein] synthase (118 aa).

Residues D8 and E58 each contribute to the Mg(2+) site.

Belongs to the P-Pant transferase superfamily. AcpS family. The cofactor is Mg(2+).

Its subcellular location is the cytoplasm. It catalyses the reaction apo-[ACP] + CoA = holo-[ACP] + adenosine 3',5'-bisphosphate + H(+). Its function is as follows. Transfers the 4'-phosphopantetheine moiety from coenzyme A to a Ser of acyl-carrier-protein. The protein is Holo-[acyl-carrier-protein] synthase of Streptococcus equi subsp. zooepidemicus (strain H70).